Consider the following 446-residue polypeptide: Glucose-1-phosphate adenylyltransferase (446 aa).

Alpha-D-glucose 1-phosphate contacts are provided by residues tyrosine 119, glycine 184, 199 to 200, and serine 217; that span reads EK.

The protein belongs to the bacterial/plant glucose-1-phosphate adenylyltransferase family. As to quaternary structure, homotetramer.

The catalysed reaction is alpha-D-glucose 1-phosphate + ATP + H(+) = ADP-alpha-D-glucose + diphosphate. Its pathway is glycan biosynthesis; glycogen biosynthesis. Involved in the biosynthesis of ADP-glucose, a building block required for the elongation reactions to produce glycogen. Catalyzes the reaction between ATP and alpha-D-glucose 1-phosphate (G1P) to produce pyrophosphate and ADP-Glc. The protein is Glucose-1-phosphate adenylyltransferase of Rhodopirellula baltica (strain DSM 10527 / NCIMB 13988 / SH1).